A 160-amino-acid polypeptide reads, in one-letter code: uncharacterized protein (160 aa).

Positions 1-23 (MSIPHSVFSALLVFVALATTTLA) are cleaved as a signal peptide. The Cytoplasmic segment spans residues 24 to 132 (STEACLPTNK…DPNTAYWSSD (109 aa)). The chain crosses the membrane as a helical span at residues 133–155 (LFGFYTTPTNVTVEMTGYLIWSM). Residues 156-160 (GNRRR) are Extracellular-facing.

The protein to yeast protein FLO1.

It localises to the cell membrane. This is an uncharacterized protein from Saccharomyces cerevisiae (strain ATCC 204508 / S288c) (Baker's yeast).